A 345-amino-acid polypeptide reads, in one-letter code: Uroporphyrinogen decarboxylase (345 aa).

Substrate-binding positions include 27 to 31 (RQAGR), Phe-46, Asp-76, Tyr-152, Ser-207, and His-321.

It belongs to the uroporphyrinogen decarboxylase family. In terms of assembly, homodimer.

The protein localises to the cytoplasm. It carries out the reaction uroporphyrinogen III + 4 H(+) = coproporphyrinogen III + 4 CO2. It functions in the pathway porphyrin-containing compound metabolism; protoporphyrin-IX biosynthesis; coproporphyrinogen-III from 5-aminolevulinate: step 4/4. Functionally, catalyzes the decarboxylation of four acetate groups of uroporphyrinogen-III to yield coproporphyrinogen-III. This chain is Uroporphyrinogen decarboxylase, found in Staphylococcus aureus (strain MRSA252).